Consider the following 439-residue polypeptide: Histone acetyltransferase GCN5 (439 aa).

Composition is skewed to basic and acidic residues over residues 1–28 (MVTK…KLEN) and 39–59 (ETNK…KETE). Positions 1-59 (MVTKHQIEEDHLDGATTDPEVKRVKLENNVEEIQPEQAETNKQEGTDKENKGKFEKETE) are disordered. Positions 100–255 (IEFRVVNNDN…GGTLMQCSML (156 aa)) constitute an N-acetyltransferase domain. Catalysis depends on glutamate 173, which acts as the Proton donor/acceptor. Acetyl-CoA contacts are provided by residues 177–179 (CAI), 184–190 (QVRGYGA), and 216–219 (YAIG). The 105-residue stretch at 327 to 431 (PKRGPHDAAI…KFFNNKVKEI (105 aa)) folds into the Bromo domain.

This sequence belongs to the acetyltransferase family. GCN5 subfamily. In terms of assembly, component of the 1.8 MDa SAGA (Spt-Ada-Gcn5 acetyltransferase) complex, which is composed of 19 subunits TRA1, SPT7, TAF5, NGG1/ADA3, SGF73, SPT20/ADA5, SPT8, TAF12, TAF6, HFI1/ADA1, UBP8, GCN5, ADA2, SPT3, SGF29, TAF10, TAF9, SGF11 and SUS1. The SAGA complex is composed of 4 modules, namely the HAT (histone acetyltransferase) module (GCN5, ADA2, NGG1/ADA3 and SGF29), the DUB (deubiquitinating) module (UBP8, SGF11, SGF73 and SUS1), the core or TAF (TBP-associated factor) module (TAF5, TAF6, TAF9, TAF10 and TAF12), and the Tra1 or SPT (Suppressor of Ty) module (TRA1, HFI1/ADA1, SPT3, SPT7, SPT8 and SPT20/ADA5). The Tra1/SPT module binds activators, the core module recruits TBP (TATA-binding protein), the HAT module contains the histone H3 acetyltransferase GCN5, and the DUB module comprises the histone H2B deubiquitinase UBP8. Also identified in an altered form of SAGA, named SALSA (SAGA altered, Spt8 absent) or SLIK (SAGA-like) complex, which contains a C-terminal truncated form of SPT7 and is missing SPT8. However, it has been shown that the SAGA and SAGA-like SALSA/SLIK transcriptional coactivators are structurally and biochemically equivalent. Component of the 0.8 MDa ADA complex, a HAT complex distinct from SAGA, which at least consists of ADA2, NGG1/ADA3, AHC1, AHC2, SGF29 and GCN5. Component of an ADA/GCN5 complex that consists of HFI1/ADA1, ADA2, NGG1/ADA3, SPT20/ADA5 and GCN5 and probably is a subcomplex of SAGA.

It localises to the nucleus. It is found in the cytoplasm. It carries out the reaction L-lysyl-[protein] + acetyl-CoA = N(6)-acetyl-L-lysyl-[protein] + CoA + H(+). It catalyses the reaction (2E)-butenoyl-CoA + L-lysyl-[protein] = N(6)-(2E)-butenoyl-L-lysyl-[protein] + CoA + H(+). Functionally, histone acetyltransferase that acetylates histone H2B to form H2BK11ac and H2BK16ac, histone H3 to form H3K9ac, H3K14ac, H3K18ac, H3K23ac, H3K27ac and H3K36ac, with a lower preference histone H4 to form H4K8ac and H4K16ac, and contributes to H2A.Z acetylation. Acetylation of histones gives a specific tag for epigenetic transcription activation and elongation. Operates in concert with certain DNA-binding transcriptional activators such as GCN4 or HAP2/3/4. Its acetyltransferase activity seems to be dependent on the association in different multisubunit complexes. Component of the transcription coactivator SAGA complex. SAGA acts as a general cofactor required for essentially all RNA polymerase II transcription. At the promoters, SAGA is required for transcription pre-initiation complex (PIC) recruitment. It influences RNA polymerase II transcriptional activity through different activities such as TBP interaction (via core/TAF module) and promoter selectivity, interaction with transcription activators (via Tra1/SPT module), and chromatin modification through histone acetylation (via HAT module) and deubiquitination (via DUB module). SAGA preferentially acetylates histones H3 (to form H3K9ac, H3K14ac, H3K18ac and H3K23ac) and H2B and deubiquitinates histone H2B. SAGA interacts with DNA via upstream activating sequences (UASs). Also identified in a modified version of SAGA named SALSA or SLIK. The cleavage of SPT7 and the absence of the SPT8 subunit in SLIK neither drive any major conformational differences in its structure compared with SAGA, nor significantly affect HAT, DUB, or DNA-binding activities. Component of the ADA histone acetyltransferase complex, which preferentially acetylates nucleosomal histones H3 (to form H3K14ac and H3K18ac) and H2B. In addition to histone acetyltransferase, can use different acyl-CoA substrates, such as (2E)-butenoyl-CoA (crotonyl-CoA) and is able to mediate histone crotonylation. Controls the metaphase-to-anaphase transition and is required for correct chromosome segregation and centromere/kinetochore function in mitosis. May be involved in response to DNA damage by genotoxic agents. This chain is Histone acetyltransferase GCN5, found in Saccharomyces cerevisiae (strain ATCC 204508 / S288c) (Baker's yeast).